Reading from the N-terminus, the 647-residue chain is MIKITFPDGAVREFESGVTTFDIAESLSKSLAKKALAGKFNDQLIDTTRAIEEDGSIEIVTPDHKDAYEVLRHSAAHLFAQAAKRLFPNLHLGVGPAIAEGFYYDTDNAEGQISNEDLPRIEAEMQKIVTENYPCIREEVTKEEALELFKDDPYKVELINEHAGAGLTVYRQGEFVDLCRGPHVPSTGRIQVFHLLNVAGAYWRGNSDNNMMQRIYGTAWFDKKDLKAYLTRLEEAKERDHRKLGKELDLFMISQEVGQGLPFWLPDGATIRRTLERYITDKELASGYQHVYTPPLASVELYKTSGHWDHYQEDMFPVMDMGDGEEFVLRPMNCPHHIQVYKNHVRSYRELPIRIAELGMMHRYEKSGALSGLQRVREMTLNDGHIFVTPEQIQEEFQRALQLIIDVYADFNLTDYRFRLSYRDPNDTHKYYDNDEMWENAQSMLKAALDEMGVDYFEAEGEAAFYGPKLDIQVKTALGNEETLSTIQLDFLLPERFDLKYIGADGEEHRPVMIHRGVISTMERFTAILIETYKGAFPTWLAPHQVTVIPISNEAHIDYAWEVAKTLRDRGVRADVDDRNEKMQYKIRTSQTSKIPYQLIVGDKEMEDKSVNVRRYGSKATHTESVEEFVENILADIARKSRPDAQA.

In terms of domain architecture, TGS spans 1–61 (MIKITFPDGA…EEDGSIEIVT (61 aa)). A catalytic region spans residues 240–538 (DHRKLGKELD…LIETYKGAFP (299 aa)). Positions 334, 385, and 515 each coordinate Zn(2+).

This sequence belongs to the class-II aminoacyl-tRNA synthetase family. As to quaternary structure, homodimer. Zn(2+) is required as a cofactor.

It is found in the cytoplasm. The enzyme catalyses tRNA(Thr) + L-threonine + ATP = L-threonyl-tRNA(Thr) + AMP + diphosphate + H(+). In terms of biological role, catalyzes the attachment of threonine to tRNA(Thr) in a two-step reaction: L-threonine is first activated by ATP to form Thr-AMP and then transferred to the acceptor end of tRNA(Thr). Also edits incorrectly charged L-seryl-tRNA(Thr). The sequence is that of Threonine--tRNA ligase from Streptococcus pyogenes serotype M6 (strain ATCC BAA-946 / MGAS10394).